We begin with the raw amino-acid sequence, 71 residues long: 26S proteasome complex subunit rpn15 (71 aa).

A disordered region spans residues 1-38 (MSRAALPSLENLEDDDEFEDFATENWPMKDTELDTGDD). A compositionally biased stretch (acidic residues) spans 11-22 (NLEDDDEFEDFA). Residues 16-25 (DEFEDFATEN) are UBS-II. The tract at residues 38 to 49 (DTLWENNWDDED) is UBS-I.

It belongs to the DSS1/SEM1 family. As to quaternary structure, interacts with mlo3, rae1, nup98/nup189 and nup146. Interacts with rad24. Interacts (via UBSs) with ubiquitin (ubi3/ubi5).

It localises to the cytoplasm. The protein localises to the nucleus. Its function is as follows. Versatile protein that might stabilize multiple protein complexes involved in diverse pathways. Subunit of the 26S proteasome which plays a role in ubiquitin-dependent proteolysis. Acts as a ubiquitin receptor of the 26S proteasome, by interacting with ubiquitin chains linked by 'Lys-63' and 'Lys-48'. Involved in nuclear export of specific sets of mRNAs. Links the mRNA adapter mlo3 to rae1 for targeting mRNA-protein complex to the proteins of the nucleoporin complex (NPC). Involved in recombinational repair of DNA. Plays a critical role in linking repair and checkpoint factors to damaged DNA sites by specifically recruiting rad24 and cdc25 to the DSBs. In Schizosaccharomyces pombe (strain 972 / ATCC 24843) (Fission yeast), this protein is 26S proteasome complex subunit rpn15 (rpn15).